We begin with the raw amino-acid sequence, 209 residues long: Uracil phosphoribosyltransferase (209 aa).

5-phospho-alpha-D-ribose 1-diphosphate is bound by residues Arg79, Arg104, and 131–139; that span reads DPMLATGGS. Uracil-binding positions include Ile194 and 199–201; that span reads GDA. Asp200 provides a ligand contact to 5-phospho-alpha-D-ribose 1-diphosphate.

The protein belongs to the UPRTase family. Mg(2+) serves as cofactor.

It carries out the reaction UMP + diphosphate = 5-phospho-alpha-D-ribose 1-diphosphate + uracil. It functions in the pathway pyrimidine metabolism; UMP biosynthesis via salvage pathway; UMP from uracil: step 1/1. Its activity is regulated as follows. Allosterically activated by GTP. In terms of biological role, catalyzes the conversion of uracil and 5-phospho-alpha-D-ribose 1-diphosphate (PRPP) to UMP and diphosphate. The polypeptide is Uracil phosphoribosyltransferase (Clostridium beijerinckii (strain ATCC 51743 / NCIMB 8052) (Clostridium acetobutylicum)).